Consider the following 401-residue polypeptide: S-adenosylmethionine synthase (401 aa).

Residue His-15 coordinates ATP. Position 17 (Asp-17) interacts with Mg(2+). K(+) is bound at residue Glu-43. L-methionine is bound by residues Glu-56 and Gln-99. The segment at 99-109 (QSPEIGAGVDT) is flexible loop. The tract at residues 101–132 (PEIGAGVDTSHEVRGSSSTDEDDRQGAGDQGL) is disordered. ATP is bound by residues 174-176 (DGK), Asp-254, 260-261 (RK), Ala-277, and Lys-281. Asp-254 is a binding site for L-methionine. Lys-285 provides a ligand contact to L-methionine.

Belongs to the AdoMet synthase family. As to quaternary structure, homotetramer; dimer of dimers. Requires Mg(2+) as cofactor. The cofactor is K(+).

The protein localises to the cytoplasm. It catalyses the reaction L-methionine + ATP + H2O = S-adenosyl-L-methionine + phosphate + diphosphate. The protein operates within amino-acid biosynthesis; S-adenosyl-L-methionine biosynthesis; S-adenosyl-L-methionine from L-methionine: step 1/1. Catalyzes the formation of S-adenosylmethionine (AdoMet) from methionine and ATP. The overall synthetic reaction is composed of two sequential steps, AdoMet formation and the subsequent tripolyphosphate hydrolysis which occurs prior to release of AdoMet from the enzyme. This chain is S-adenosylmethionine synthase, found in Corynebacterium urealyticum (strain ATCC 43042 / DSM 7109).